The sequence spans 302 residues: Nucleotide-binding protein Bamb_2855 (302 aa).

G8–S15 is an ATP binding site. D57 to S60 is a GTP binding site.

The protein belongs to the RapZ-like family.

Displays ATPase and GTPase activities. In Burkholderia ambifaria (strain ATCC BAA-244 / DSM 16087 / CCUG 44356 / LMG 19182 / AMMD) (Burkholderia cepacia (strain AMMD)), this protein is Nucleotide-binding protein Bamb_2855.